The sequence spans 215 residues: Large ribosomal subunit protein uL1 (215 aa).

The protein belongs to the universal ribosomal protein uL1 family. Part of the 50S ribosomal subunit.

In terms of biological role, binds directly to 23S rRNA. Probably involved in E site tRNA release. Protein L1 is also a translational repressor protein, it controls the translation of its operon by binding to its mRNA. The polypeptide is Large ribosomal subunit protein uL1 (Staphylothermus marinus (strain ATCC 43588 / DSM 3639 / JCM 9404 / F1)).